A 257-amino-acid polypeptide reads, in one-letter code: Transmembrane protein 101 (257 aa).

8 consecutive transmembrane segments (helical) span residues 21-40 (VLLT…LYAE), 52-72 (VPYL…MSFG), 77-97 (WFAL…YIGG), 110-130 (YSRT…AGEL), 139-159 (SLQS…AYSL), 182-202 (LFFV…YVTL), 206-226 (ILAV…AYWH), and 233-253 (FWNQ…AVIL).

The protein localises to the membrane. May activate NF-kappa-B signaling pathways. In Homo sapiens (Human), this protein is Transmembrane protein 101 (TMEM101).